Here is a 523-residue protein sequence, read N- to C-terminus: GMP synthase [glutamine-hydrolyzing] (523 aa).

One can recognise a Glutamine amidotransferase type-1 domain in the interval 9–198; the sequence is PVLVVDYGAQ…LTEIAGLEQN (190 aa). The active-site Nucleophile is Cys-86. Catalysis depends on residues His-172 and Glu-174. Residues 199 to 397 enclose the GMPS ATP-PPase domain; sequence WTAANIAEEL…LGLPEVIVAR (199 aa). ATP is bound at residue 227–233; that stretch reads SGGVDSA.

As to quaternary structure, homodimer.

The enzyme catalyses XMP + L-glutamine + ATP + H2O = GMP + L-glutamate + AMP + diphosphate + 2 H(+). It functions in the pathway purine metabolism; GMP biosynthesis; GMP from XMP (L-Gln route): step 1/1. In terms of biological role, catalyzes the synthesis of GMP from XMP. The chain is GMP synthase [glutamine-hydrolyzing] from Corynebacterium efficiens (strain DSM 44549 / YS-314 / AJ 12310 / JCM 11189 / NBRC 100395).